A 294-amino-acid polypeptide reads, in one-letter code: GTP cyclohydrolase FolE2 (294 aa).

This sequence belongs to the GTP cyclohydrolase IV family.

The enzyme catalyses GTP + H2O = 7,8-dihydroneopterin 3'-triphosphate + formate + H(+). It participates in cofactor biosynthesis; 7,8-dihydroneopterin triphosphate biosynthesis; 7,8-dihydroneopterin triphosphate from GTP: step 1/1. In terms of biological role, converts GTP to 7,8-dihydroneopterin triphosphate. The protein is GTP cyclohydrolase FolE2 of Acinetobacter baylyi (strain ATCC 33305 / BD413 / ADP1).